Consider the following 351-residue polypeptide: uncharacterized protein (351 aa).

D215, D226, H290, E319, and E333 together coordinate Mn(2+).

This sequence belongs to the peptidase M24B family. It depends on Mn(2+) as a cofactor.

This is an uncharacterized protein from Staphylococcus aureus (strain MRSA252).